Consider the following 307-residue polypeptide: B3 domain-containing protein At5g18000 (307 aa).

A DNA-binding region (TF-B3 1) is located at residues 20 to 115 (FFKILRREDH…CFNVTIFEAD (96 aa)). Disordered stretches follow at residues 122-141 (PRKT…RKSI) and 151-209 (IESW…SEAG). Positions 166-177 (ESTSGRLTQKQE) are enriched in polar residues. Residues 178 to 192 (LNLRKKEADKTEKSK) show a composition bias toward basic and acidic residues. Positions 214 to 307 (IPEFKLTIKK…TEMRVKVSKE (94 aa)) form a DNA-binding region, TF-B3 2.

Its subcellular location is the nucleus. The chain is B3 domain-containing protein At5g18000 from Arabidopsis thaliana (Mouse-ear cress).